The sequence spans 449 residues: MGRMFGTDGVRGIANKELTADLAYKLGKAGAFILTEGTHRPKILVGMDTRISGDMLESALVAGILSVGAEAICVGVIPTPAIAYLTRKYNADAGVVISASHNPVEYNGIKFFNKNGYKLSDELEDSIQALIRDDFKDVPVLTGENIGRKIEEDGEAIRDYIDFAKSTIKGDLKGLKVALDCANGASYITSVEAFKELGAEVHVINNKPDGININRNSGSTHPEDLMEYVVKNNCHMGLAFDGDADRCLAIDEKGNLINGDFILAICGKELKKQGRLKKNTIVVTVMSNLGLDIAMKKEEINTIKTKVGDRYVLEEMLKNDYAIGGEQSGHIIFSDYNTTGDGLVTALQLAHIVKESGKTFSELCSIMKELPQVLVNAKVSNDQKDIYLKDEEIKSEIDTITKNLDGSGRVLIRPSGTEPLVRVMLEGENQKEIDKLAHGLAKLIENKVK.

Ser-100 functions as the Phosphoserine intermediate in the catalytic mechanism. Ser-100, Asp-241, Asp-243, and Asp-245 together coordinate Mg(2+). The residue at position 100 (Ser-100) is a Phosphoserine.

It belongs to the phosphohexose mutase family. Requires Mg(2+) as cofactor. Activated by phosphorylation.

It carries out the reaction alpha-D-glucosamine 1-phosphate = D-glucosamine 6-phosphate. Functionally, catalyzes the conversion of glucosamine-6-phosphate to glucosamine-1-phosphate. In Clostridium botulinum (strain Kyoto / Type A2), this protein is Phosphoglucosamine mutase.